A 626-amino-acid polypeptide reads, in one-letter code: Chaperone protein HtpG (626 aa).

Residues 1–331 are a; substrate-binding; sequence MSETVERHEF…TDDLPLNVSR (331 aa). Residues 332–544 are b; the sequence is EMLQSTPTLQ…GMGPDLQMQR (213 aa). A c region spans residues 545–626; that stretch reads LLRRAGRGFG…GTAAKPAESA (82 aa).

The protein belongs to the heat shock protein 90 family. In terms of assembly, homodimer.

It localises to the cytoplasm. Molecular chaperone. Has ATPase activity. The polypeptide is Chaperone protein HtpG (Methylorubrum extorquens (strain PA1) (Methylobacterium extorquens)).